Reading from the N-terminus, the 475-residue chain is Glutamate--tRNA ligase (475 aa).

A 'HIGH' region motif is present at residues 9–19 (PSPTGYLHVGG). The 'KMSKS' region motif lies at 240 to 244 (KLSKR). Lysine 243 provides a ligand contact to ATP.

The protein belongs to the class-I aminoacyl-tRNA synthetase family. Glutamate--tRNA ligase type 1 subfamily. In terms of assembly, monomer.

The protein resides in the cytoplasm. The catalysed reaction is tRNA(Glu) + L-glutamate + ATP = L-glutamyl-tRNA(Glu) + AMP + diphosphate. Catalyzes the attachment of glutamate to tRNA(Glu) in a two-step reaction: glutamate is first activated by ATP to form Glu-AMP and then transferred to the acceptor end of tRNA(Glu). The chain is Glutamate--tRNA ligase from Vibrio campbellii (strain ATCC BAA-1116).